A 322-amino-acid polypeptide reads, in one-letter code: Sideroflexin-1 (322 aa).

S2 carries the post-translational modification N-acetylserine. The Mitochondrial matrix segment spans residues S2–T102. Residues I103–W120 traverse the membrane as a helical segment. Topologically, residues Q121–E146 are mitochondrial intermembrane. The helical transmembrane segment at L147–A167 threads the bilayer. Over L168–P174 the chain is Mitochondrial matrix. A helical membrane pass occupies residues L175 to L195. Residues M196 to Q228 lie on the Mitochondrial intermembrane side of the membrane. The chain crosses the membrane as a helical span at residues V229–N249. Residues T250–P266 lie on the Mitochondrial matrix side of the membrane. Residues I267 to F287 form a helical membrane-spanning segment. Over P288–L322 the chain is Mitochondrial intermembrane.

This sequence belongs to the sideroflexin family. In terms of tissue distribution, highly expressed in tissues with high one-carbon metabolism activity, such as blood, liver and kidney.

The protein localises to the mitochondrion inner membrane. It catalyses the reaction L-serine(in) = L-serine(out). It carries out the reaction L-alanine(in) = L-alanine(out). The enzyme catalyses L-cysteine(in) = L-cysteine(out). Its function is as follows. Amino acid transporter importing serine, an essential substrate of the mitochondrial branch of the one-carbon pathway, into mitochondria. Mitochondrial serine is then converted to glycine and formate, which exits to the cytosol where it is used to generate the charged folates that serve as one-carbon donors. May also transport other amino acids including alanine and cysteine. The sequence is that of Sideroflexin-1 from Homo sapiens (Human).